The chain runs to 298 residues: Pyridoxal kinase PdxY (298 aa).

Serine 17 contacts substrate. Residues aspartate 119 and glutamate 156 each contribute to the ATP site. Residue aspartate 234 participates in substrate binding.

It belongs to the pyridoxine kinase family. PdxY subfamily. In terms of assembly, homodimer. Mg(2+) is required as a cofactor.

It catalyses the reaction pyridoxal + ATP = pyridoxal 5'-phosphate + ADP + H(+). It functions in the pathway cofactor metabolism; pyridoxal 5'-phosphate salvage; pyridoxal 5'-phosphate from pyridoxal: step 1/1. Pyridoxal kinase involved in the salvage pathway of pyridoxal 5'-phosphate (PLP). Catalyzes the phosphorylation of pyridoxal to PLP. This is Pyridoxal kinase PdxY from Deinococcus radiodurans (strain ATCC 13939 / DSM 20539 / JCM 16871 / CCUG 27074 / LMG 4051 / NBRC 15346 / NCIMB 9279 / VKM B-1422 / R1).